The primary structure comprises 88 residues: UPF0250 protein Sama_2593 (88 aa).

It belongs to the UPF0250 family.

The chain is UPF0250 protein Sama_2593 from Shewanella amazonensis (strain ATCC BAA-1098 / SB2B).